Consider the following 158-residue polypeptide: Dysbindin domain-containing protein 1 (158 aa).

The interval 1–38 is disordered; it reads MEPSEGASPGGLVKEVDMPQAALSAPVPVTGTSGQSPM. A phosphoserine mark is found at Ser95 and Ser119. The segment at 96–158 is disordered; the sequence is DDENVASDSH…ILTVERPKED (63 aa). Residues 125-141 show a composition bias toward basic and acidic residues; it reads TRAEQNREKQPFGDPER.

The protein belongs to the dysbindin family.

The polypeptide is Dysbindin domain-containing protein 1 (DBNDD1) (Bos taurus (Bovine)).